Reading from the N-terminus, the 504-residue chain is ATP synthase subunit alpha, chloroplastic (504 aa).

Residue 170–177 (GDRQTGKT) participates in ATP binding.

The protein belongs to the ATPase alpha/beta chains family. In terms of assembly, F-type ATPases have 2 components, CF(1) - the catalytic core - and CF(0) - the membrane proton channel. CF(1) has five subunits: alpha(3), beta(3), gamma(1), delta(1), epsilon(1). CF(0) has four main subunits: a, b, b' and c.

The protein resides in the plastid. Its subcellular location is the chloroplast thylakoid membrane. The catalysed reaction is ATP + H2O + 4 H(+)(in) = ADP + phosphate + 5 H(+)(out). Produces ATP from ADP in the presence of a proton gradient across the membrane. The alpha chain is a regulatory subunit. This is ATP synthase subunit alpha, chloroplastic from Pyropia yezoensis (Susabi-nori).